A 257-amino-acid chain; its full sequence is Flavodoxin/ferredoxin--NADP reductase (257 aa).

An FAD-binding FR-type domain is found at 2–110 (NPWINANVLK…EKSFGFFTLD (109 aa)). Residues 59–62 (RAYS), Y75, 83–85 (KLS), and T125 each bind FAD. Residues 152 to 153 (VR), 182 to 183 (SR), R193, 223 to 225 (NPA), and D229 each bind NADP(+). Residue 256 to 257 (YW) coordinates FAD.

Belongs to the ferredoxin--NADP reductase type 1 family. Requires FAD as cofactor.

The protein localises to the cytoplasm. It catalyses the reaction 2 reduced [2Fe-2S]-[ferredoxin] + NADP(+) + H(+) = 2 oxidized [2Fe-2S]-[ferredoxin] + NADPH. The catalysed reaction is reduced [flavodoxin] + NADP(+) = oxidized [flavodoxin] + NADPH + 2 H(+). In terms of biological role, transports electrons between flavodoxin or ferredoxin and NADPH. This chain is Flavodoxin/ferredoxin--NADP reductase (fpr), found in Buchnera aphidicola subsp. Schizaphis graminum (strain Sg).